The following is a 228-amino-acid chain: MKKKAVILLSGGPDSTTVLEIVSKTDYEIYALSFNYHRRNSLEVQKIQGLIKDYNVKQHRVINIDLQSFIGSALTDDNIDVPKFKNTDQLPSDIPVTYVPARNTIFLSYALGVAEVIGARDIFIGVHTNDYTNYPDCRPEYIKSFEAMANLATRVGVNGEKITIHAPLINMTKEQIIKKGLELGVDYSKTISCYDPTEDGLSCGQCLSCIVRLDAFKKNNVQDPIQYV.

9–19 (LSGGPDSTTVL) lines the ATP pocket. Zn(2+) is bound by residues Cys193, Cys203, Cys206, and Cys209.

It belongs to the QueC family. Requires Zn(2+) as cofactor.

It catalyses the reaction 7-carboxy-7-deazaguanine + NH4(+) + ATP = 7-cyano-7-deazaguanine + ADP + phosphate + H2O + H(+). Its pathway is purine metabolism; 7-cyano-7-deazaguanine biosynthesis. Functionally, catalyzes the ATP-dependent conversion of 7-carboxy-7-deazaguanine (CDG) to 7-cyano-7-deazaguanine (preQ(0)). This Rickettsia rickettsii (strain Iowa) protein is 7-cyano-7-deazaguanine synthase.